The following is a 165-amino-acid chain: Cystatin-like protein (165 aa).

The first 19 residues, 1-19, serve as a signal peptide directing secretion; the sequence is MDVALKLLLLAALTLLASA. Cystine bridges form between C80/C92 and C104/C118.

Its function is as follows. Involved in hypoxia tolerance. This Clarias batrachus (Walking catfish) protein is Cystatin-like protein.